Consider the following 173-residue polypeptide: Crossover junction endodeoxyribonuclease RuvC (173 aa).

Residues Asp8, Glu67, and Asp139 contribute to the active site. Asp8, Glu67, and Asp139 together coordinate Mg(2+).

The protein belongs to the RuvC family. As to quaternary structure, homodimer which binds Holliday junction (HJ) DNA. The HJ becomes 2-fold symmetrical on binding to RuvC with unstacked arms; it has a different conformation from HJ DNA in complex with RuvA. In the full resolvosome a probable DNA-RuvA(4)-RuvB(12)-RuvC(2) complex forms which resolves the HJ. Mg(2+) serves as cofactor.

It localises to the cytoplasm. The enzyme catalyses Endonucleolytic cleavage at a junction such as a reciprocal single-stranded crossover between two homologous DNA duplexes (Holliday junction).. The RuvA-RuvB-RuvC complex processes Holliday junction (HJ) DNA during genetic recombination and DNA repair. Endonuclease that resolves HJ intermediates. Cleaves cruciform DNA by making single-stranded nicks across the HJ at symmetrical positions within the homologous arms, yielding a 5'-phosphate and a 3'-hydroxyl group; requires a central core of homology in the junction. The consensus cleavage sequence is 5'-(A/T)TT(C/G)-3'. Cleavage occurs on the 3'-side of the TT dinucleotide at the point of strand exchange. HJ branch migration catalyzed by RuvA-RuvB allows RuvC to scan DNA until it finds its consensus sequence, where it cleaves and resolves the cruciform DNA. This chain is Crossover junction endodeoxyribonuclease RuvC, found in Serratia proteamaculans (strain 568).